We begin with the raw amino-acid sequence, 407 residues long: MSSSPMLGGIADRWRELHGQDSWNGLLDPLDLDLRSSILSYGELVQATYDSFNRERRSPHAGACVYGHGDLLAAAGASAAGSYAVTKFVYATSGLPVPEAFLLLPLPSLLPPAWSRESNWMGYVAVATDEGVAALGRRDIVVAWRGTVESLEWVNDFDFTPVPAAPVLGAAAAANPRAIVHRGFLSVYTSSNKDSKYNKASARDQVLEEVRRLMELYKDEVTSITVVGHSLGASLATLNAVDIVANGANCPPASSSSSQPPCPVTAIVFASPRVGDGFFKAAFASFPDLRALHVKNAGDVVPMYPPLGYVDVAVKLRISTSRSPYLRSPGTIETLHNLECYLHGVAGEQGSAGGFKLEVDRDVALANKGVDALKDKYPVPPRWWVSKNRCMVKDADGHWALHDFEQI.

Ser230 (acyl-ester intermediate) is an active-site residue. Residues Ser230, Asp299, and His336 each act as charge relay system in the active site.

The protein belongs to the AB hydrolase superfamily. Lipase family.

The protein localises to the cytoplasm. Functionally, acylhydrolase that catalyzes the hydrolysis of phospholipids at the sn-1 position. This chain is Phospholipase A1-II 7, found in Oryza sativa subsp. indica (Rice).